We begin with the raw amino-acid sequence, 1143 residues long: Probable ATP-dependent RNA helicase DHX34 (1143 aa).

2 disordered regions span residues 1–24 (MPPP…EEEA) and 75–94 (TSRK…PALA). Positions 76–85 (SRKEEKDPGQ) are enriched in basic and acidic residues. In terms of domain architecture, Helicase ATP-binding spans 172–332 (LQTLKEHQVV…FSNAPVVQVP (161 aa)). ATP is bound at residue 185 to 192 (GDTGCGKS). The DEAH box signature appears at 279–282 (DEVH). The 169-residue stretch at 368–536 (SIDHKYPPEE…SLVLQMKSMS (169 aa)) folds into the Helicase C-terminal domain. The negatively regulates interaction with UPF1 stretch occupies residues 701-955 (QAAQVGDSYS…LRARWESALD (255 aa)). The segment at 724 to 766 (LKRQHEEGAGRRRKVLRLQEEQDGGSSDEDRAGPAPPGASDGV) is disordered. A phosphoserine mark is found at Ser-749 and Ser-750. The interval 810–1143 (PQLAVPDAFN…EVLRHRKQHV (334 aa)) is required for phosphorylation of UPF1. Not required for interaction with UPF1. A required for the interaction with SMG1 and subsequent phosphorylation of UPF1 region spans residues 957–1143 (QLAHQAQQQL…EVLRHRKQHV (187 aa)).

The protein belongs to the DEAD box helicase family. DEAH subfamily. In terms of assembly, forms a complex with RUVBL1 and RUVBL2. Part of a complex composed of SMG1, DHX34 and UPF1; within the complex DHX34 acts as a scaffolding protein to facilitate SMG1 phosphorylation of UPF1. Interacts with UPF1, MOV10, EIF4A3, XRN2, SMG6, SMG7, SMG9, UPF3A, UPF3B, CASC3/MLN51, XRN1, DIS3 and DCP1A; the interactions are RNA-independent. Interacts with NCBP1/CPB80; the interaction is RNA-dependent. Interacts (via C-terminus) with SMG1; the interaction is RNA-independent. As to expression, expressed in whole blood, testis and spleen. Also expressed in the brain.

It catalyses the reaction ATP + H2O = ADP + phosphate + H(+). Probable ATP-binding RNA helicase required for nonsense-mediated decay (NMD) degradation of mRNA transcripts containing premature stop codons. Promotes the phosphorylation of UPF1 along with its interaction with key NMD pathway proteins UPF2 and EIF4A3. Interaction with the RUVBL1-RUVBL2 complex results in loss of nucleotide binding ability and ATP hydrolysis of the complex. Negatively regulates the nucleotide binding ability and ATP hydrolysis of the RUVBL1-RUVBL2 complex via induction of N-terminus conformation changes of the RUVBL2 subunits. This chain is Probable ATP-dependent RNA helicase DHX34, found in Homo sapiens (Human).